A 671-amino-acid chain; its full sequence is Protein KHNYN (671 aa).

Disordered regions lie at residues 234-274, 294-327, 344-402, and 577-626; these read RVAG…LSGE, EVAPLKGKASGKQEVPQQRGGFSVQGEPSGAHVP, HNGS…GGNL, and GPTL…RKTR. Residues 250–272 show a composition bias toward basic and acidic residues; that stretch reads TVEKEERKQDAVRDMGSGRKELS. Pro residues predominate over residues 351–365; the sequence is PRVPSPPPAPEPPWP. A Phosphoserine modification is found at Ser-355. The segment covering 367–381 has biased composition (basic and acidic residues); the sequence is GDRDRDRDRGDRGDK. Residues 430 to 582 enclose the RNase NYN domain; that stretch reads LRHIVIDGSN…LGRNGPTLDE (153 aa). Residues 591–612 are compositionally biased toward polar residues; it reads QGSSKTQQPSKGSTEQANQQQG.

Belongs to the N4BP1 family.

The protein is Protein KHNYN (Khnyn) of Mus musculus (Mouse).